The primary structure comprises 355 residues: Chemerin-like receptor 2 (355 aa).

The Extracellular portion of the chain corresponds to 1 to 41 (MEDLEETLFEEFENYSYDLDYYSLESDLEEKVQLGVVHWVS). Residue N14 is glycosylated (N-linked (GlcNAc...) asparagine). Residues 42-62 (LVLYCLAFVLGIPGNAIVIWF) form a helical membrane-spanning segment. Residues 63–73 (TGFKWKKTVTT) lie on the Cytoplasmic side of the membrane. Residues 74–94 (LWFLNLAIADFIFLLFLPLYI) traverse the membrane as a helical segment. Topologically, residues 95 to 112 (SYVAMNFHWPFGIWLCKA) are extracellular. C110 and C187 are disulfide-bonded. The helical transmembrane segment at 113–133 (NSFTAQLNMFASVFFLTVISL) threads the bilayer. The Cytoplasmic segment spans residues 134 to 154 (DHYIHLIHPVLSHRHRTLKNS). A helical transmembrane segment spans residues 155–175 (LIVIIFIWLLASLIGGPALYF). Over 176 to 210 (RDTVEFNNHTLCYNNFQKHDPDLTLIRHHVLTWVK) the chain is Extracellular. The helical transmembrane segment at 211 to 231 (FIIGYLFPLLTMSICYLCLIF) threads the bilayer. At 232–247 (KVKKRSILISSRHFWT) the chain is on the cytoplasmic side. The helical transmembrane segment at 248-268 (ILVVVVAFVVCWTPYHLFSIW) threads the bilayer. The Extracellular segment spans residues 269 to 286 (ELTIHHNSYSHHVMQAGI). The helical transmembrane segment at 287–307 (PLSTGLAFLNSCLNPILYVLI) threads the bilayer. Residues 308-355 (SKKFQARFRSSVAEILKYTLWEVSCSGTVSEQLRNSETKNLCLLETAQ) lie on the Cytoplasmic side of the membrane.

The protein belongs to the chemokine-like receptor (CMKLR) family. Expressed in hippocampus.

It localises to the cell membrane. In terms of biological role, receptor for chemoattractant adipokine chemerin/RARRES2 suggesting a role for this receptor in the regulation of inflammation and energy homesotasis. Signals mainly via beta-arrestin pathway. Binding of RARRES2 activates weakly G proteins, calcium mobilization and MAPK1/MAPK3 (ERK1/2) phosphorylation too. Also acts as a receptor for TAFA1, mediates its effects on neuronal stem-cell proliferation and differentiation via the activation of ROCK/ERK and ROCK/STAT3 signaling pathway. Functionally, (Microbial infection) Coreceptor for HIV-1. In Homo sapiens (Human), this protein is Chemerin-like receptor 2.